Reading from the N-terminus, the 444-residue chain is Probable kynurenine--oxoglutarate transaminase BNA3 (444 aa).

Lysine 271 carries the post-translational modification N6-(pyridoxal phosphate)lysine.

It belongs to the class-I pyridoxal-phosphate-dependent aminotransferase family. In terms of assembly, homodimer. The cofactor is pyridoxal 5'-phosphate.

It is found in the cytoplasm. It localises to the mitochondrion. It carries out the reaction L-kynurenine + 2-oxoglutarate = kynurenate + L-glutamate + H2O. The protein operates within amino-acid degradation; L-kynurenine degradation; kynurenate from L-kynurenine: step 1/2. Catalyzes the irreversible transamination of the L-tryptophan metabolite L-kynurenine to form kynurenic acid (KA). This is Probable kynurenine--oxoglutarate transaminase BNA3 (BNA3) from Saccharomyces cerevisiae (strain ATCC 204508 / S288c) (Baker's yeast).